The following is a 113-amino-acid chain: Transmembrane protein 256 (113 aa).

Positions 1 to 29 (MAGVGAAFRRLGALSGAGALGLASYGAHG) are cleaved as a signal peptide. At 30–63 (AQFPDAYGKELFDKANKHHFLHSLALLGVPSCRK) the chain is on the extracellular side. The residue at position 43 (Lys-43) is an N6-acetyllysine. The chain crosses the membrane as a helical span at residues 64–84 (PVWAGLLLASGTTLFCTSFYY). Residues 85 to 92 (QALSGDTS) lie on the Cytoplasmic side of the membrane. The helical transmembrane segment at 93–113 (IQTLGPVGGSLLILGWLALAF) threads the bilayer.

Belongs to the TMEM256 family.

The protein localises to the membrane. The polypeptide is Transmembrane protein 256 (Tmem256) (Mus musculus (Mouse)).